The chain runs to 748 residues: Signal transducer and activator of transcription 4 (748 aa).

The region spanning 569–664 (WIDGYVMGFV…ENPLKYLYPD (96 aa)) is the SH2 domain. Lysine 667 is subject to N6-acetyllysine. At tyrosine 693 the chain carries Phosphotyrosine; by JAK. A Phosphoserine; by MAP2K6 modification is found at serine 721.

Belongs to the transcription factor STAT family. In terms of assembly, forms a homodimer or a heterodimer with a related family member. Interacts with ARL2BP. The SH2 domain interacts, in vitro, with IL12RB2 via a short cytoplasmic domain. Interacts with STAT1. Interacts with JUN; this complex efficiently interacts with the AP-1-related sequence of the IFN-gamma. Post-translationally, acetylation at Lys-667 is required for JAK2-mediated phosphorylation and activation of STAT4. In terms of processing, tyrosine phosphorylated upon IL12 and IFN-alpha activation, but not by IFN-gamma in T-lymphocytes and NK cells. Serine phosphorylation is required for maximal transcriptional activity but not for DNA binding. Phosphorylation by MAP2K6 at Ser-721 is required for full transcriptional activity induced by IL12. However this serine phosphorylation is not required for cell proliferation although critical for IFN-gamma production.

It is found in the cytoplasm. The protein localises to the nucleus. Its function is as follows. Transcriptional regulator mainly expressed in hematopoietic cells that plays a critical role in cellular growth, differentiation and immune response. Plays a key role in the differentiation of T-helper 1 cells and the production of interferon-gamma. Also participates in multiple neutrophil functions including chemotaxis and production of the neutrophil extracellular traps. After IL12 binding to its receptor IL12RB2, STAT4 interacts with the intracellular domain of IL12RB2 and becomes tyrosine phosphorylated. Phosphorylated STAT4 then homodimerizes and migrates to the nucleus where it can recognize STAT target sequences present in IL12 responsive genes. Although IL12 appears to be the predominant activating signal, STAT4 can also be phosphorylated and activated in response to IFN-gamma stimulation via JAK1 and TYK2 and in response to different interleukins including IL23, IL2 and IL35. Transcription activation of IFN-gamma gene is mediated by interaction with JUN that forms a complex that efficiently interacts with the AP-1-related sequence of the IFN-gamma promoter. In response to IFN-alpha/beta signaling, acts as a transcriptional repressor and suppresses IL5 and IL13 mRNA expression during response to T-cell receptor (TCR) activation. This chain is Signal transducer and activator of transcription 4 (STAT4), found in Homo sapiens (Human).